Here is a 321-residue protein sequence, read N- to C-terminus: G-protein coupled receptor aex-2 (321 aa).

The Extracellular segment spans residues 1 to 24 (MNSTDIIANVTKPFVENLTLGETA). 3 N-linked (GlcNAc...) asparagine glycosylation sites follow: asparagine 2, asparagine 9, and asparagine 17. The helical transmembrane segment at 25-45 (FYISCGIVGTVFNALVLWIAL) threads the bilayer. The Cytoplasmic portion of the chain corresponds to 46-55 (TYINTEDKPR). The helical transmembrane segment at 56–76 (QIIVINMTVADLLMCIVYMKT) threads the bilayer. Over 77 to 90 (RPWLSHFNLWLCHP) the chain is Extracellular. Cysteine 88 and cysteine 161 are oxidised to a cystine. The helical transmembrane segment at 91–111 (YYVIIWTCQMCSCLNLVWLNV) threads the bilayer. The Cytoplasmic segment spans residues 112-132 (DKLIYIQFPLHYYQIVNRKRL). Residues 133–153 (LWITAATWGGLYAMNIALVTF) form a helical membrane-spanning segment. Over 154–175 (LKITRGSCLGVSLNPYVYLLSP) the chain is Extracellular. Residues 176–196 (IFYVVMILTSFSLSALIYCIA) form a helical membrane-spanning segment. At 197 to 221 (HNLTHMEERQRSKLFRRLFFLFSST) the chain is on the cytoplasmic side. Residues 222–242 (LWTFFTCLPYRLLYLFSIFCG) traverse the membrane as a helical segment. Residues 243 to 254 (ETCQINNYYKTA) lie on the Extracellular side of the membrane. The helical transmembrane segment at 255–275 (TNLFFRLLIVGIMINPVITIW) threads the bilayer. Topologically, residues 276–321 (TQRIYRLRLMRMFGRLRENSSTEVLMVSNRRASERPPEHTPLRCDM) are cytoplasmic.

It belongs to the G-protein coupled receptor 1 family. In terms of tissue distribution, expressed in the intestinal muscle, anal depressor, AVL and DVB GABAergic neurons, enteric muscles, the nerve ring, the ventral nerve cord and head mesodermal cells.

Its subcellular location is the cell membrane. The protein localises to the cell projection. It localises to the cilium. In terms of biological role, G-protein coupled receptor for the nlp-40 neuropeptide. The activity of this receptor is mediated by G proteins which activate adenylyl cyclase. Plays a role in the defecation motor program, which is a coordinated series of three muscle contractions that occurs every 45 seconds. Specifically, acts in GABAergic neurons, such as AVL and DVB, to control the expulsion step of defecation. Required for fatty acid uptake and metabolism by intestinal cells and therefore regulates the levels of triglycerides in the intestine. The sequence is that of G-protein coupled receptor aex-2 from Caenorhabditis elegans.